We begin with the raw amino-acid sequence, 319 residues long: Cytochrome f (319 aa).

The signal sequence occupies residues 1 to 34 (MQNRNTYDLKKKMTRLISVLVMIHIITRTSISNA). Residues Tyr-35, Cys-55, Cys-58, and His-59 each contribute to the heme site. Residues 285 to 304 (VKGLLLFLASVILAQIFLVL) traverse the membrane as a helical segment.

It belongs to the cytochrome f family. The 4 large subunits of the cytochrome b6-f complex are cytochrome b6, subunit IV (17 kDa polypeptide, petD), cytochrome f and the Rieske protein, while the 4 small subunits are PetG, PetL, PetM and PetN. The complex functions as a dimer. The cofactor is heme.

It is found in the plastid. It localises to the chloroplast thylakoid membrane. Functionally, component of the cytochrome b6-f complex, which mediates electron transfer between photosystem II (PSII) and photosystem I (PSI), cyclic electron flow around PSI, and state transitions. The sequence is that of Cytochrome f (petA) from Picea abies (Norway spruce).